The primary structure comprises 427 residues: UDP-N-acetylglucosamine 1-carboxyvinyltransferase 1 (427 aa).

Lys23 to Asn24 provides a ligand contact to phosphoenolpyruvate. A UDP-N-acetyl-alpha-D-glucosamine-binding site is contributed by Arg96. The active-site Proton donor is the Cys120. Cys120 carries the 2-(S-cysteinyl)pyruvic acid O-phosphothioketal modification. UDP-N-acetyl-alpha-D-glucosamine-binding positions include Arg125 to Leu129, Asp309, and Val331.

The protein belongs to the EPSP synthase family. MurA subfamily.

The protein resides in the cytoplasm. It catalyses the reaction phosphoenolpyruvate + UDP-N-acetyl-alpha-D-glucosamine = UDP-N-acetyl-3-O-(1-carboxyvinyl)-alpha-D-glucosamine + phosphate. The protein operates within cell wall biogenesis; peptidoglycan biosynthesis. In terms of biological role, cell wall formation. Adds enolpyruvyl to UDP-N-acetylglucosamine. This chain is UDP-N-acetylglucosamine 1-carboxyvinyltransferase 1, found in Streptococcus pneumoniae serotype 4 (strain ATCC BAA-334 / TIGR4).